The sequence spans 309 residues: Elongator complex protein 5 (309 aa).

Phosphoserine occurs at positions 3 and 4.

It belongs to the ELP5 family. Component of the elongator complex, which consists of ELP1/IKI3, ELP2, ELP3, ELP4, ELP5/IKI1 and ELP6. The elongator complex is composed of two copies of the Elp123 subcomplex (composed of ELP1/IKI3, ELP2 and ELP3) and two copies of the Elp456 subcomplex (composed of ELP4, ELP5/IKI1 and ELP6). The Elp123 subcomplex forms a two-lobed scaffold, which binds the Elp456 subcomplex asymmetrically. In each lobe, ELP2 is tightly sandwiched between ELP1/IKI3 and ELP3. The Elp123 subcomplex binds tRNA through ELP1/IKI3 and ELP3 and can bind 2 tRNAs simultaneously. tRNA-binding by the Elp123 subcomplex induces conformational rearrangements which precisely position the targeted anticodon base in the active site. The Elp456 subcomplex binds tRNA and has ATPase activity. Interacts with KTI11/DPH3.

The protein resides in the cytoplasm. Its subcellular location is the nucleus. It functions in the pathway tRNA modification; 5-methoxycarbonylmethyl-2-thiouridine-tRNA biosynthesis. In terms of biological role, component of the elongator complex which is required for multiple tRNA modifications, including mcm5U (5-methoxycarbonylmethyl uridine), mcm5s2U (5-methoxycarbonylmethyl-2-thiouridine), and ncm5U (5-carbamoylmethyl uridine). The elongator complex catalyzes formation of carboxymethyluridine in the wobble base at position 34 in tRNAs. It functions as a gamma-toxin target (TOT); disruption of the complex confers resistance to Kluyveromyces lactis toxin zymocin (pGKL1 killer toxin). May also be involved in sensitivity to Pichia inositovora toxin. This Saccharomyces cerevisiae (strain ATCC 204508 / S288c) (Baker's yeast) protein is Elongator complex protein 5 (IKI1).